Reading from the N-terminus, the 349-residue chain is Dihydroorotate dehydrogenase (quinone) (349 aa).

Residues 67–71 and T91 each bind FMN; that span reads AGLDK. K71 is a substrate binding site. 116–120 lines the substrate pocket; it reads NRLGF. The FMN site is built by N147 and N180. Substrate is bound at residue N180. S183 (nucleophile) is an active-site residue. N185 serves as a coordination point for substrate. FMN is bound by residues K225 and T253. 254–255 contributes to the substrate binding site; sequence NT. Residues G276, G305, and 326–327 each bind FMN; that span reads YT.

It belongs to the dihydroorotate dehydrogenase family. Type 2 subfamily. As to quaternary structure, monomer. FMN is required as a cofactor.

It is found in the cell membrane. The enzyme catalyses (S)-dihydroorotate + a quinone = orotate + a quinol. The protein operates within pyrimidine metabolism; UMP biosynthesis via de novo pathway; orotate from (S)-dihydroorotate (quinone route): step 1/1. In terms of biological role, catalyzes the conversion of dihydroorotate to orotate with quinone as electron acceptor. The polypeptide is Dihydroorotate dehydrogenase (quinone) (Bordetella parapertussis (strain 12822 / ATCC BAA-587 / NCTC 13253)).